The primary structure comprises 218 residues: Large ribosomal subunit protein uL3c (218 aa).

A disordered region spans residues 127–161; sequence GFSRGPMTHGSKNHREPGSTGAGTTPGRIYPGKRM.

The protein belongs to the universal ribosomal protein uL3 family. Part of the 50S ribosomal subunit.

The protein resides in the plastid. Its subcellular location is the organellar chromatophore. In terms of biological role, one of the primary rRNA binding proteins, it binds directly near the 3'-end of the 23S rRNA, where it nucleates assembly of the 50S subunit. In Paulinella chromatophora, this protein is Large ribosomal subunit protein uL3c (rpl3).